A 352-amino-acid polypeptide reads, in one-letter code: Protein RecA (352 aa).

ATP is bound at residue 74 to 81 (GPESSGKT).

This sequence belongs to the RecA family.

The protein resides in the cytoplasm. In terms of biological role, can catalyze the hydrolysis of ATP in the presence of single-stranded DNA, the ATP-dependent uptake of single-stranded DNA by duplex DNA, and the ATP-dependent hybridization of homologous single-stranded DNAs. It interacts with LexA causing its activation and leading to its autocatalytic cleavage. This chain is Protein RecA, found in Ralstonia nicotianae (strain ATCC BAA-1114 / GMI1000) (Ralstonia solanacearum).